A 177-amino-acid chain; its full sequence is Peptide methionine sulfoxide reductase MsrA (177 aa).

The active site involves Cys15.

Belongs to the MsrA Met sulfoxide reductase family.

The enzyme catalyses L-methionyl-[protein] + [thioredoxin]-disulfide + H2O = L-methionyl-(S)-S-oxide-[protein] + [thioredoxin]-dithiol. The catalysed reaction is [thioredoxin]-disulfide + L-methionine + H2O = L-methionine (S)-S-oxide + [thioredoxin]-dithiol. Functionally, has an important function as a repair enzyme for proteins that have been inactivated by oxidation. Catalyzes the reversible oxidation-reduction of methionine sulfoxide in proteins to methionine. The polypeptide is Peptide methionine sulfoxide reductase MsrA (Listeria welshimeri serovar 6b (strain ATCC 35897 / DSM 20650 / CCUG 15529 / CIP 8149 / NCTC 11857 / SLCC 5334 / V8)).